An 833-amino-acid chain; its full sequence is Kinesin-like protein KIFC3 (833 aa).

The disordered stretch occupies residues Leu19–Arg74. Over residues Pro30 to Pro48 the composition is skewed to low complexity. 2 coiled-coil regions span residues Leu102–Ala362 and Leu395–Arg432. Residues Asn445–Val768 enclose the Kinesin motor domain. Gly528–Thr535 is a binding site for ATP. Residues Glu786 to Val833 form a disordered region. The segment covering Ala806–Pro815 has biased composition (polar residues). Phosphoserine occurs at positions 813 and 817.

This sequence belongs to the TRAFAC class myosin-kinesin ATPase superfamily. Kinesin family.

The protein localises to the cell junction. It is found in the adherens junction. It localises to the cytoplasm. The protein resides in the cytoskeleton. Its subcellular location is the microtubule organizing center. The protein localises to the centrosome. It is found in the cytoplasmic vesicle membrane. Minus-end microtubule-dependent motor protein. Involved in apically targeted transport. Required for zonula adherens maintenance. The protein is Kinesin-like protein KIFC3 (KIFC3) of Homo sapiens (Human).